The primary structure comprises 360 residues: Popeye domain-containing protein 1 (360 aa).

Residues 1–48 lie on the Extracellular side of the membrane; that stretch reads MNYTESSPLRESTAIGFTPELESIIPVPSNKTTCENWREIHHLVFHVA. N-linked (GlcNAc...) asparagine glycosylation is found at N2 and N30. A helical membrane pass occupies residues 49 to 69; the sequence is NICFAVGLVIPTTLHLHMIFL. R70 is a topological domain (cytoplasmic). A helical membrane pass occupies residues 71-91; sequence GMLTLGCTLYIVWATLYRCAL. A topological domain (extracellular) is located at residue D92. The helical transmembrane segment at 93–113 threads the bilayer; sequence IMIWNSVFLGVNILHLSYLLY. Residues 93–115 form a required for interaction with CAV3 region; the sequence is IMIWNSVFLGVNILHLSYLLYKK. Residues 114-360 lie on the Cytoplasmic side of the membrane; that stretch reads KKRPVKIEKE…PNTLKVHQLP (247 aa). Residues 136 to 186 are required for interaction with KCNK2; sequence RVPPDLFRRLTGQFCMIQTLKKGQTYAAEDKTSVDDRLSILLKGKMKVSYR. S295 and S318 each carry phosphoserine. The disordered stretch occupies residues 317 to 360; that stretch reads SSLHVSSPHQRASAKMKPIEEGAEDDDDVFEPASPNTLKVHQLP. Residues 337–346 are compositionally biased toward acidic residues; it reads EGAEDDDDVF. The span at 350–360 shows a compositional bias: polar residues; it reads SPNTLKVHQLP.

Belongs to the popeye family. In terms of assembly, homodimer. Homodimerization requires the C-terminus cytoplasmic region. Interacts (via the C-terminus cytoplasmic tail) with TJP1. Interacts (via the C-terminus cytoplasmic tail) with ARHGEF25/GEFT (via the DH domain). Interacts (via the C-terminus cytoplasmic tail) with VAMP3. Interacts with KCNK2; the interaction enhances KCNK2 surface expression and is inhibited by cAMP. Interacts with CAV3. As to expression, expressed in epithelial cells (at protein level). Expressed in fetal and adult heart and skeletal muscle.

Its subcellular location is the lateral cell membrane. The protein resides in the cell junction. It is found in the tight junction. It localises to the membrane. The protein localises to the cell membrane. Its subcellular location is the sarcolemma. The protein resides in the caveola. Its function is as follows. Cell adhesion molecule involved in the establishment and/or maintenance of cell integrity. Involved in the formation and regulation of the tight junction (TJ) paracellular permeability barrier in epithelial cells. Plays a role in VAMP3-mediated vesicular transport and recycling of different receptor molecules through its interaction with VAMP3. Plays a role in the regulation of cell shape and movement by modulating the Rho-family GTPase activity through its interaction with ARHGEF25/GEFT. Induces primordial adhesive contact and aggregation of epithelial cells in a Ca(2+)-independent manner. Also involved in striated muscle regeneration and repair and in the regulation of cell spreading. Important for the maintenance of cardiac function. Plays a regulatory function in heart rate dynamics mediated, at least in part, through cAMP-binding and, probably, by increasing cell surface expression of the potassium channel KCNK2 and enhancing current density. Is also a caveolae-associated protein important for the preservation of caveolae structural and functional integrity as well as for heart protection against ischemia injury. The protein is Popeye domain-containing protein 1 of Homo sapiens (Human).